Here is a 327-residue protein sequence, read N- to C-terminus: Phenylalanine--tRNA ligase alpha subunit (327 aa).

A Mg(2+)-binding site is contributed by Glu-252.

Belongs to the class-II aminoacyl-tRNA synthetase family. Phe-tRNA synthetase alpha subunit type 1 subfamily. Tetramer of two alpha and two beta subunits. Requires Mg(2+) as cofactor.

It localises to the cytoplasm. It catalyses the reaction tRNA(Phe) + L-phenylalanine + ATP = L-phenylalanyl-tRNA(Phe) + AMP + diphosphate + H(+). The sequence is that of Phenylalanine--tRNA ligase alpha subunit from Shewanella sediminis (strain HAW-EB3).